The primary structure comprises 149 residues: Large ribosomal subunit protein bL9 (149 aa).

Belongs to the bacterial ribosomal protein bL9 family.

Functionally, binds to the 23S rRNA. The polypeptide is Large ribosomal subunit protein bL9 (Geobacillus thermodenitrificans (strain NG80-2)).